A 218-amino-acid chain; its full sequence is Small ribosomal subunit protein uS5 (218 aa).

One can recognise an S5 DRBM domain in the interval 66–129 (LKQELLNVNL…REAKLNLVPV (64 aa)).

It belongs to the universal ribosomal protein uS5 family. As to quaternary structure, part of the 30S ribosomal subunit. Contacts protein S4.

In terms of biological role, with S4 and S12 plays an important role in translational accuracy. This is Small ribosomal subunit protein uS5 from Pyrobaculum aerophilum (strain ATCC 51768 / DSM 7523 / JCM 9630 / CIP 104966 / NBRC 100827 / IM2).